A 298-amino-acid polypeptide reads, in one-letter code: Aquaporin NIP2-1 (298 aa).

3 N-linked (GlcNAc...) asparagine glycosylation sites follow: N4, N13, and N26. The next 2 helical transmembrane spans lie at 51 to 71 and 85 to 105; these read VVSE…AAGI and SIAG…ISGA. Residues 108 to 110 carry the NPA 1 motif; the sequence is NPA. 3 helical membrane-spanning segments follow: residues 124 to 144, 166 to 186, and 194 to 214; these read IQVP…SFVL, SLVV…AVAT, and LAGL…GAIS. The NPA 2 motif lies at 219–221; that stretch reads NPA. The helical transmembrane segment at 237 to 257 threads the bilayer; sequence WIYFLGPVMGTLSGAWTYTFI.

The protein belongs to the MIP/aquaporin (TC 1.A.8) family. NIP (TC 1.A.8.12) subfamily. Mainly expressed in the roots. In roots, it localizes in the main and lateral roots, but not in root hairs. Within a root, it localizes on the plasma membrane of the distal side of both exodermis and endodermis, where casparian strips exist (at protein level). Expressed low levels in leaves and anthers.

The protein localises to the cell membrane. Functionally, silicon influx transporter responsible for silicon transport from the external solution to the root cells. Is coupled with the silicon efflux transporter LSI2 in both exodermal and endodermal root cells for an efficient silicon transport across the cells into the stele. Silicon is beneficial to plant growth and helps plants to overcome abiotic and biotic stresses by preventing lodging (falling over) and increasing resistance to pests and diseases, as well as other stresses. Is coupled with LSI2 transporter in roots for efficient uptake of arsenite, which is further dispatched in shoots and grains. Mediates uptake of methylated arsenic species in roots. In Oryza sativa subsp. japonica (Rice), this protein is Aquaporin NIP2-1.